Here is a 165-residue protein sequence, read N- to C-terminus: Small ribosomal subunit protein uS5 (165 aa).

Residues 10-73 (LVEKLVAVDR…EAARRNMITV (64 aa)) enclose the S5 DRBM domain.

This sequence belongs to the universal ribosomal protein uS5 family. As to quaternary structure, part of the 30S ribosomal subunit. Contacts proteins S4 and S8.

Its function is as follows. With S4 and S12 plays an important role in translational accuracy. Functionally, located at the back of the 30S subunit body where it stabilizes the conformation of the head with respect to the body. In Acinetobacter baumannii (strain AB307-0294), this protein is Small ribosomal subunit protein uS5.